Reading from the N-terminus, the 128-residue chain is MKVHMLKSKIHNAIVTSGDLEYEGSITIDKELLEIADMMANEKVLVVNNNNGERFETYIIEGTRGLREIQLNGAAARCALPGDEIIIMAFAEMEPEEARNWQPMIVIVDRMNNPKRRHRVGKDNEYLG.

Ser25 functions as the Schiff-base intermediate with substrate; via pyruvic acid in the catalytic mechanism. Ser25 is modified (pyruvic acid (Ser)). Thr57 lines the substrate pocket. The active-site Proton donor is Tyr58. 73 to 75 (GAA) provides a ligand contact to substrate.

This sequence belongs to the PanD family. Heterooctamer of four alpha and four beta subunits. It depends on pyruvate as a cofactor. In terms of processing, is synthesized initially as an inactive proenzyme, which is activated by self-cleavage at a specific serine bond to produce a beta-subunit with a hydroxyl group at its C-terminus and an alpha-subunit with a pyruvoyl group at its N-terminus.

The protein resides in the cytoplasm. It carries out the reaction L-aspartate + H(+) = beta-alanine + CO2. Its pathway is cofactor biosynthesis; (R)-pantothenate biosynthesis; beta-alanine from L-aspartate: step 1/1. Its function is as follows. Catalyzes the pyruvoyl-dependent decarboxylation of aspartate to produce beta-alanine. The chain is Aspartate 1-decarboxylase from Chlorobaculum parvum (strain DSM 263 / NCIMB 8327) (Chlorobium vibrioforme subsp. thiosulfatophilum).